Here is a 69-residue protein sequence, read N- to C-terminus: Fumarase D (69 aa).

Belongs to the FumD family.

It carries out the reaction (S)-malate = fumarate + H2O. In vitro catalyzes the addition of water to fumarate, forming malate. Cannot catalyze the reverse reaction. Cannot use the cis-isomer maleate as substrate. In Shigella flexneri, this protein is Fumarase D.